The sequence spans 303 residues: Mitochondrial substrate carrier family protein E (303 aa).

The Mitochondrial intermembrane portion of the chain corresponds to 1–8 (MENKKESS). Solcar repeat units follow at residues 6 to 93 (ESSL…SKQW), 104 to 197 (ESTI…CKST), and 210 to 298 (LPIP…LKYL). A helical transmembrane segment spans residues 9 to 29 (LLYILTGATSGLLADSIMHPV). Residues 30-67 (DTVRARVQIEKVGKSQYKGTFNALNQIIKNEGVSYLYK) lie on the Mitochondrial matrix side of the membrane. The helical transmembrane segment at 68-88 (GFPIVATATVPAHALYFLGYE) threads the bilayer. Residues 89 to 109 (YSKQWVTDRYGKKWGESTITH) are Mitochondrial intermembrane-facing. A helical membrane pass occupies residues 110–130 (FSAGFVADALGSLIWVPMDII). The Mitochondrial matrix portion of the chain corresponds to 131–171 (KQRLQVQTNTQKLNPNQTYYKGSFHAGKIILQEEGIRGLYR). A helical membrane pass occupies residues 172–192 (GFMPALATYGPFVGIYFSVYE). Residues 193–215 (KCKSTISSLLSKEKDQYLPIPYQ) lie on the Mitochondrial intermembrane side of the membrane. Residues 216–236 (LGSGFFAGAFAAAVTCPLDVI) traverse the membrane as a helical segment. Residues 237-268 (KTRIQVQRSTEKQIYKGMWDSFKTILKEEGPK) are Mitochondrial matrix-facing. The chain crosses the membrane as a helical span at residues 269–289 (AFVKGMGARIWWIAPGNALTI). Residues 290-303 (ASYEQLKYLFKDLI) are Mitochondrial intermembrane-facing.

It belongs to the mitochondrial carrier (TC 2.A.29) family.

It is found in the mitochondrion inner membrane. Mitochondrial solute carriers shuttle metabolites, nucleotides, and cofactors through the mitochondrial inner membrane. The sequence is that of Mitochondrial substrate carrier family protein E (mcfE) from Dictyostelium discoideum (Social amoeba).